Here is a 293-residue protein sequence, read N- to C-terminus: 4-hydroxy-tetrahydrodipicolinate synthase (293 aa).

Pyruvate is bound at residue threonine 45. Tyrosine 133 functions as the Proton donor/acceptor in the catalytic mechanism. Lysine 161 acts as the Schiff-base intermediate with substrate in catalysis. Pyruvate is bound at residue isoleucine 203.

This sequence belongs to the DapA family. Homotetramer; dimer of dimers.

It is found in the cytoplasm. The enzyme catalyses L-aspartate 4-semialdehyde + pyruvate = (2S,4S)-4-hydroxy-2,3,4,5-tetrahydrodipicolinate + H2O + H(+). The protein operates within amino-acid biosynthesis; L-lysine biosynthesis via DAP pathway; (S)-tetrahydrodipicolinate from L-aspartate: step 3/4. Functionally, catalyzes the condensation of (S)-aspartate-beta-semialdehyde [(S)-ASA] and pyruvate to 4-hydroxy-tetrahydrodipicolinate (HTPA). In Aliivibrio fischeri (strain ATCC 700601 / ES114) (Vibrio fischeri), this protein is 4-hydroxy-tetrahydrodipicolinate synthase.